Here is a 721-residue protein sequence, read N- to C-terminus: Protein mu-NS (721 aa).

The interval 1–13 is interaction with sigma-NS; sequence MASFKGFSVNTVP. The RNA-binding stretch occupies residues 1 to 38; that stretch reads MASFKGFSVNTVPVSKAKRDISSLAATPGIRSQPFTPS. Residues 14-40 form an interaction with mu-2 region; it reads VSKAKRDISSLAATPGIRSQPFTPSVD. Residues 471–721 form an involved in the formation of factory-like inclusions region; it reads SSDMVDGIKL…IDFSVPTDEL (251 aa). 2 coiled-coil regions span residues 523-560 and 628-686; these read LLSQLRELSSEVTRLQMELSRTQSLNAQLEADAKSAQA and QMNG…NQRQ.

Belongs to the orthoreovirus mu-NS protein family. Interacts with mu-2. Interacts with sigma-NS; in viral factories. Interacts with the inner capsid proteins lambda-1 and sigma-2, and outer capsid protein lambda-2; in viral factories. In terms of processing, the N-terminus is blocked.

It localises to the host cytoplasm. Non-structural protein implicated with protein sigma-NS in forming the matrix of viral factories, which are large inclusions in the host cytoplasm where replication intermediates are assembled and viral RNA replication takes place. Together with mu-2, recruits the other core proteins to these factories. The sequence is that of Protein mu-NS (M3) from Mammalia (T1L).